The following is a 338-amino-acid chain: Holliday junction branch migration complex subunit RuvB (338 aa).

The interval A4 to Y187 is large ATPase domain (RuvB-L). Residues R27, G68, K71, T72, T73, E134 to Y136, R177, Y187, and R224 each bind ATP. T72 serves as a coordination point for Mg(2+). Residues N188–D258 are small ATPAse domain (RuvB-S). The interval S261–K338 is head domain (RuvB-H). Residues R297, R316, and R321 each coordinate DNA.

The protein belongs to the RuvB family. As to quaternary structure, homohexamer. Forms an RuvA(8)-RuvB(12)-Holliday junction (HJ) complex. HJ DNA is sandwiched between 2 RuvA tetramers; dsDNA enters through RuvA and exits via RuvB. An RuvB hexamer assembles on each DNA strand where it exits the tetramer. Each RuvB hexamer is contacted by two RuvA subunits (via domain III) on 2 adjacent RuvB subunits; this complex drives branch migration. In the full resolvosome a probable DNA-RuvA(4)-RuvB(12)-RuvC(2) complex forms which resolves the HJ.

The protein localises to the cytoplasm. The catalysed reaction is ATP + H2O = ADP + phosphate + H(+). The RuvA-RuvB-RuvC complex processes Holliday junction (HJ) DNA during genetic recombination and DNA repair, while the RuvA-RuvB complex plays an important role in the rescue of blocked DNA replication forks via replication fork reversal (RFR). RuvA specifically binds to HJ cruciform DNA, conferring on it an open structure. The RuvB hexamer acts as an ATP-dependent pump, pulling dsDNA into and through the RuvAB complex. RuvB forms 2 homohexamers on either side of HJ DNA bound by 1 or 2 RuvA tetramers; 4 subunits per hexamer contact DNA at a time. Coordinated motions by a converter formed by DNA-disengaged RuvB subunits stimulates ATP hydrolysis and nucleotide exchange. Immobilization of the converter enables RuvB to convert the ATP-contained energy into a lever motion, pulling 2 nucleotides of DNA out of the RuvA tetramer per ATP hydrolyzed, thus driving DNA branch migration. The RuvB motors rotate together with the DNA substrate, which together with the progressing nucleotide cycle form the mechanistic basis for DNA recombination by continuous HJ branch migration. Branch migration allows RuvC to scan DNA until it finds its consensus sequence, where it cleaves and resolves cruciform DNA. This Shewanella woodyi (strain ATCC 51908 / MS32) protein is Holliday junction branch migration complex subunit RuvB.